The primary structure comprises 379 residues: Homoserine O-succinyltransferase (379 aa).

The AB hydrolase-1 domain occupies 48-357 (NAVLICHALS…SAHGHDAFLM (310 aa)). S154 (nucleophile) is an active-site residue. R224 contributes to the substrate binding site. Active-site residues include D319 and H352. Residue D353 coordinates substrate.

Belongs to the AB hydrolase superfamily. MetX family. Homodimer.

The protein localises to the cytoplasm. The enzyme catalyses L-homoserine + succinyl-CoA = O-succinyl-L-homoserine + CoA. Its pathway is amino-acid biosynthesis; L-methionine biosynthesis via de novo pathway; O-succinyl-L-homoserine from L-homoserine: step 1/1. Functionally, transfers a succinyl group from succinyl-CoA to L-homoserine, forming succinyl-L-homoserine. The protein is Homoserine O-succinyltransferase of Neisseria gonorrhoeae (strain ATCC 700825 / FA 1090).